A 571-amino-acid chain; its full sequence is L-erythrulose 1-kinase (571 aa).

The DhaK domain occupies 7-331; that stretch reads SPDDFADEAV…WTAPVETPAY (325 aa). Histidine 217 serves as the catalytic Tele-hemiaminal-histidine intermediate. Positions 367–567 constitute a DhaL domain; the sequence is RNIVAVLETF…FAMLMKALGE (201 aa). ATP is bound by residues 396-402, 442-443, glycine 484, arginine 539, and 552-554; these read DGDHGQG, TS, and DPG.

It carries out the reaction L-erythrulose + ATP = L-erythrulose 1-phosphate + ADP + H(+). The protein operates within carbohydrate metabolism; L-threitol degradation. In terms of biological role, kinase that has a preference for L-erythrulose, producing L-erythrulose-1P. Involved in the degradation pathway of L-threitol, that allows M.smegmatis to grow on this compound as the sole carbon source. Is also able to phosphorylate D-erythrulose and dihydroxyacetone in vitro. The sequence is that of L-erythrulose 1-kinase from Mycolicibacterium smegmatis (strain ATCC 700084 / mc(2)155) (Mycobacterium smegmatis).